Reading from the N-terminus, the 35-residue chain is Photosystem II reaction center protein T (35 aa).

A helical transmembrane segment spans residues 3–23 (ALVYTFLLVSTLGIIFFAIFF).

Belongs to the PsbT family. In terms of assembly, PSII is composed of 1 copy each of membrane proteins PsbA, PsbB, PsbC, PsbD, PsbE, PsbF, PsbH, PsbI, PsbJ, PsbK, PsbL, PsbM, PsbT, PsbY, PsbZ, Psb30/Ycf12, at least 3 peripheral proteins of the oxygen-evolving complex and a large number of cofactors. It forms dimeric complexes.

The protein resides in the plastid. The protein localises to the chloroplast thylakoid membrane. Found at the monomer-monomer interface of the photosystem II (PS II) dimer, plays a role in assembly and dimerization of PSII. PSII is a light-driven water plastoquinone oxidoreductase, using light energy to abstract electrons from H(2)O, generating a proton gradient subsequently used for ATP formation. The sequence is that of Photosystem II reaction center protein T from Nelumbo lutea (American lotus).